We begin with the raw amino-acid sequence, 361 residues long: Protein Csal_2339 (361 aa).

S91 (proton acceptor) is an active-site residue. Substrate-binding positions include 92–93 and 259–260; these read GS and GT.

Belongs to the proline racemase family.

It carries out the reaction trans-4-hydroxy-L-proline = cis-4-hydroxy-D-proline. In terms of biological role, in vitro, catalyzes the epimerization of trans-4-hydroxy-L-proline (t4LHyp) to cis-4-hydroxy-D-proline (c4DHyp), albeit with very low efficiency. The physiological substrate may be different. Displays neither proline racemase activity nor t3LHyp dehydratase activity. This Chromohalobacter salexigens (strain ATCC BAA-138 / DSM 3043 / CIP 106854 / NCIMB 13768 / 1H11) protein is Protein Csal_2339.